Reading from the N-terminus, the 198-residue chain is Ribonuclease HII (198 aa).

In terms of domain architecture, RNase H type-2 spans 10–198; that stretch reads HLVAGVDEVG…PVKRALGLAS (189 aa). A divalent metal cation contacts are provided by aspartate 16, glutamate 17, and aspartate 108.

Belongs to the RNase HII family. The cofactor is Mn(2+). Mg(2+) is required as a cofactor.

The protein localises to the cytoplasm. It catalyses the reaction Endonucleolytic cleavage to 5'-phosphomonoester.. Endonuclease that specifically degrades the RNA of RNA-DNA hybrids. This Escherichia coli (strain ATCC 8739 / DSM 1576 / NBRC 3972 / NCIMB 8545 / WDCM 00012 / Crooks) protein is Ribonuclease HII.